The chain runs to 1364 residues: DNA-directed RNA polymerase subunit beta' (1364 aa).

Residues C250, C317, C324, and C327 each contribute to the Zn(2+) site. Positions 1318–1342 (TRHNIDPSASTNAAFTRPDVDNELK) are disordered.

It belongs to the RNA polymerase beta' chain family. RpoC2 subfamily. As to quaternary structure, in cyanobacteria the RNAP catalytic core is composed of 2 alpha, 1 beta, 1 beta', 1 gamma and 1 omega subunit. When a sigma factor is associated with the core the holoenzyme is formed, which can initiate transcription. It depends on Zn(2+) as a cofactor.

The catalysed reaction is RNA(n) + a ribonucleoside 5'-triphosphate = RNA(n+1) + diphosphate. DNA-dependent RNA polymerase catalyzes the transcription of DNA into RNA using the four ribonucleoside triphosphates as substrates. This is DNA-directed RNA polymerase subunit beta' from Synechococcus sp. (strain CC9902).